The chain runs to 430 residues: MGLHNPLPSSLKSECKKAGKILTSFVDPRQTLGAQEVIPPSVLTNAKGLVIMTVLKAGFLFSGRIGSGLIVARLDDGTWSAPSAVMTGGMGVGAQIGSELTDFVIILNSKAAVQTFARLGSITLGGNLSIAAGPLGRNAEAGGGASVGGMAPMFSYSKTKGLFAGVSLEGSVLVERRDANRSLYRGDITAKRLLSGQVAQPAAADPLYRVLNSKIFNLNRGDEGDIYNDVPIYADDEPEDIWGPSSKSTKRRDSADRSSSYSRRGDSYRSNRSRAHDDDDEDDYSFSRSKSLSRKTAGGSLRSSKMDNRRSKYADTPSPRRSRSYSDEDEESVYSSDVSTESSSQFSSRSSEYSKPSRPTAPKPKFKQDSLGPNQARAMYSFAGEQPGDLSFQKGDIIDIVERSGSHDDWWTGRIGYREGIFPANYVKLS.

A disordered region spans residues 237 to 372 (EPEDIWGPSS…KPKFKQDSLG (136 aa)). Over residues 263-277 (RRGDSYRSNRSRAHD) the composition is skewed to basic and acidic residues. Serine 285 carries the post-translational modification Phosphoserine. The segment covering 304–313 (SKMDNRRSKY) has biased composition (basic and acidic residues). A Phosphothreonine modification is found at threonine 316. Phosphoserine is present on residues serine 318 and serine 324. A Phosphotyrosine modification is found at tyrosine 325. 3 positions are modified to phosphoserine: serine 326, serine 354, and serine 406. Residues 333–358 (VYSSDVSTESSSQFSSRSSEYSKPSR) are compositionally biased toward low complexity. An SH3 domain is found at 371–430 (LGPNQARAMYSFAGEQPGDLSFQKGDIIDIVERSGSHDDWWTGRIGYREGIFPANYVKLS).

Belongs to the SH3YL1 family.

The protein is SH3 domain-containing protein PJ696.02 of Schizosaccharomyces pombe (strain 972 / ATCC 24843) (Fission yeast).